The primary structure comprises 394 residues: 4-O-methyl-glucuronoyl methylesterase (394 aa).

A signal peptide spans 1 to 18 (MVHLTPALLLASAAFAAA). 3 disulfide bridges follow: cysteine 29–cysteine 63, cysteine 210–cysteine 345, and cysteine 242–cysteine 317. The GXSYXG catalytic site motif signature appears at 209–214 (GCSRNG). The Nucleophile role is filled by serine 211. Substrate is bound by residues lysine 215, glutamine 257, glutamate 265, and tryptophan 308. Histidine 344 acts as the Proton donor/acceptor in catalysis.

Belongs to the carbohydrate esterase 15 (CE15) family.

It localises to the secreted. It carries out the reaction a 4-O-methyl-alpha-D-glucuronosyl ester derivative + H2O = 4-O-methyl-alpha-D-glucuronate derivative + an alcohol + H(+). Functionally, glucuronoyl esterase which may play a significant role in biomass degradation, as it is considered to disconnect hemicellulose from lignin through the hydrolysis of the ester bond between 4-O-methyl-D-glucuronic acid residues of glucuronoxylans and aromatic alcohols of lignin. The chain is 4-O-methyl-glucuronoyl methylesterase from Neurospora crassa (strain ATCC 24698 / 74-OR23-1A / CBS 708.71 / DSM 1257 / FGSC 987).